The chain runs to 626 residues: Carnitine O-acetyltransferase (626 aa).

Lysine 93 carries the post-translational modification N6-succinyllysine. Lysine 261 carries the N6-acetyllysine; alternate modification. At lysine 261 the chain carries N6-succinyllysine; alternate. Lysine 268 is modified (N6-acetyllysine). Histidine 343 serves as the catalytic Proton acceptor. CoA-binding positions include lysine 419 and 423–430 (KSEKLSPD). 2 residues coordinate (R)-carnitine: tyrosine 452 and serine 454. CoA is bound at residue serine 456. Threonine 465 contributes to the (R)-carnitine binding site. The CoA site is built by arginine 504 and glutamine 555. Residues 624–626 (AKL) carry the Microbody targeting signal motif.

It belongs to the carnitine/choline acetyltransferase family. Monomer. In terms of tissue distribution, mostly in skeletal muscle, less in heart, liver and pancreas, only weakly detectable in brain, placenta, lung and kidney.

It is found in the endoplasmic reticulum. The protein localises to the peroxisome. Its subcellular location is the mitochondrion inner membrane. The protein resides in the mitochondrion. The enzyme catalyses (R)-carnitine + acetyl-CoA = O-acetyl-(R)-carnitine + CoA. It catalyses the reaction propanoyl-CoA + (R)-carnitine = O-propanoyl-(R)-carnitine + CoA. The catalysed reaction is butanoyl-CoA + (R)-carnitine = O-butanoyl-(R)-carnitine + CoA. It carries out the reaction hexanoyl-CoA + (R)-carnitine = O-hexanoyl-(R)-carnitine + CoA. The enzyme catalyses octanoyl-CoA + (R)-carnitine = O-octanoyl-(R)-carnitine + CoA. It catalyses the reaction decanoyl-CoA + (R)-carnitine = O-decanoyl-(R)-carnitine + CoA. The catalysed reaction is 3-methylbutanoyl-CoA + (R)-carnitine = O-3-methylbutanoyl-(R)-carnitine + CoA. It carries out the reaction 2-methylpropanoyl-CoA + (R)-carnitine = O-isobutanoyl-(R)-carnitine + CoA. The enzyme catalyses 2-methylbutanoyl-CoA + (R)-carnitine = O-2-methylbutanoyl-(R)-carnitine + CoA. It catalyses the reaction acetoacetyl-CoA + (R)-carnitine = O-3-oxobutanoyl-(R)-carnitine + CoA. The catalysed reaction is 3-hydroxybutanoyl-CoA + (R)-carnitine = O-3-hydroxybutanoyl-(R)-carnitine + CoA. It carries out the reaction 4,8-dimethylnonanoyl-CoA + (R)-carnitine = O-4,8-dimethylnonanoyl-(R)-carnitine + CoA. The enzyme catalyses 2,6-dimethylheptanoyl-CoA + (R)-carnitine = O-2,6-dimethylheptanoyl-(R)-carnitine + CoA. Its function is as follows. Catalyzes the reversible transfer of acyl groups from carnitine to coenzyme A (CoA) and regulates the acyl-CoA/CoA ratio. Also plays a crucial role in the transport of fatty acids for beta-oxidation. Responsible for the synthesis of short- and branched-chain acylcarnitines. Active towards some branched-chain amino acid oxidation pathway (BCAAO) intermediates. Trans-2-enoyl-CoAs and 2-methylacyl-CoAs are poor substrates. This is Carnitine O-acetyltransferase from Homo sapiens (Human).